Reading from the N-terminus, the 101-residue chain is NADH-quinone oxidoreductase subunit K (101 aa).

The next 3 helical transmembrane spans lie at 4-24, 30-50, and 62-82; these read LGHLLVLGAALFCISLAGIFL, IVLLMSIELMLLAVNVNFIAF, and FVFFILTVAAAEAAIGLAILV.

It belongs to the complex I subunit 4L family. NDH-1 is composed of 14 different subunits. Subunits NuoA, H, J, K, L, M, N constitute the membrane sector of the complex.

The protein localises to the cell inner membrane. It carries out the reaction a quinone + NADH + 5 H(+)(in) = a quinol + NAD(+) + 4 H(+)(out). NDH-1 shuttles electrons from NADH, via FMN and iron-sulfur (Fe-S) centers, to quinones in the respiratory chain. The immediate electron acceptor for the enzyme in this species is believed to be ubiquinone. Couples the redox reaction to proton translocation (for every two electrons transferred, four hydrogen ions are translocated across the cytoplasmic membrane), and thus conserves the redox energy in a proton gradient. In Xylella fastidiosa (strain 9a5c), this protein is NADH-quinone oxidoreductase subunit K.